The primary structure comprises 350 residues: Protein MENT (350 aa).

Residues 1 to 23 (MVPAACMLLWALLLSLEYRAAGA) form the signal peptide.

In terms of processing, phosphorylation sites are present in the extracellular medium. In terms of tissue distribution, high expression in testis, but low in other tissues.

Its subcellular location is the secreted. In terms of biological role, involved in control of cellular proliferation. Onconcogenic modifier contributing to the tumor suppressor function of DNMT3B. In Mus musculus (Mouse), this protein is Protein MENT (Ment).